A 247-amino-acid polypeptide reads, in one-letter code: Ribosomal RNA small subunit methyltransferase G (247 aa).

Glycine 86, leucine 91, and arginine 154 together coordinate S-adenosyl-L-methionine.

It belongs to the methyltransferase superfamily. RNA methyltransferase RsmG family.

The protein resides in the cytoplasm. Specifically methylates the N7 position of a guanine in 16S rRNA. The sequence is that of Ribosomal RNA small subunit methyltransferase G from Leptospira biflexa serovar Patoc (strain Patoc 1 / Ames).